Consider the following 535-residue polypeptide: CTP synthase (535 aa).

The amidoligase domain stretch occupies residues 1–267 (MTKYIFVTGG…DQIVCDHLKL (267 aa)). S13 lines the CTP pocket. Residue S13 coordinates UTP. 14–19 (SLGKGI) lines the ATP pocket. L-glutamine is bound at residue Y54. D71 is a binding site for ATP. The Mg(2+) site is built by D71 and E141. Residues 148-150 (DIE), 188-193 (KTKPTQ), and K224 contribute to the CTP site. UTP-binding positions include 188–193 (KTKPTQ) and K224. ATP is bound at residue 240–242 (RDA). The region spanning 292-534 (KIALVGKYVE…VKASLTNKES (243 aa)) is the Glutamine amidotransferase type-1 domain. G354 is a binding site for L-glutamine. C381 (nucleophile; for glutamine hydrolysis) is an active-site residue. L-glutamine-binding positions include 382 to 385 (LGMQ), E405, and R462. Residues H507 and E509 contribute to the active site.

It belongs to the CTP synthase family. As to quaternary structure, homotetramer.

It carries out the reaction UTP + L-glutamine + ATP + H2O = CTP + L-glutamate + ADP + phosphate + 2 H(+). The catalysed reaction is L-glutamine + H2O = L-glutamate + NH4(+). It catalyses the reaction UTP + NH4(+) + ATP = CTP + ADP + phosphate + 2 H(+). It participates in pyrimidine metabolism; CTP biosynthesis via de novo pathway; CTP from UDP: step 2/2. With respect to regulation, allosterically activated by GTP, when glutamine is the substrate; GTP has no effect on the reaction when ammonia is the substrate. The allosteric effector GTP functions by stabilizing the protein conformation that binds the tetrahedral intermediate(s) formed during glutamine hydrolysis. Inhibited by the product CTP, via allosteric rather than competitive inhibition. Functionally, catalyzes the ATP-dependent amination of UTP to CTP with either L-glutamine or ammonia as the source of nitrogen. Regulates intracellular CTP levels through interactions with the four ribonucleotide triphosphates. The polypeptide is CTP synthase (Bacillus anthracis (strain A0248)).